The following is a 344-amino-acid chain: Centromere protein L (344 aa).

Residues 1–32 form a disordered region; that stretch reads MAGGRPAGSAIEMEGAMRTLPSSGRPSGTGWQ. Over residues 20 to 32 the composition is skewed to polar residues; sequence LPSSGRPSGTGWQ.

This sequence belongs to the CENP-L/IML3 family. Component of the CENPA-HI complex, at least composed of CENPH, CENPI, CENPK, CENPL, CENPM, CENPO and CENPP.

It localises to the nucleus. The protein localises to the chromosome. Its subcellular location is the centromere. Functionally, component of the CENPA-HI complex, a centromeric complex involved in assembly of kinetochore proteins, mitotic progression and chromosome segregation. This is Centromere protein L (CENPL) from Gallus gallus (Chicken).